The chain runs to 273 residues: 4-hydroxy-tetrahydrodipicolinate reductase (273 aa).

NAD(+) is bound by residues 12–17 (GAGGRM) and Glu-38. Arg-39 provides a ligand contact to NADP(+). Residues 102–104 (GTT) and 126–129 (AANF) each bind NAD(+). The active-site Proton donor/acceptor is the His-159. Residue His-160 participates in (S)-2,3,4,5-tetrahydrodipicolinate binding. Residue Lys-163 is the Proton donor of the active site. 169–170 (GT) is a (S)-2,3,4,5-tetrahydrodipicolinate binding site.

Belongs to the DapB family. As to quaternary structure, homotetramer.

It localises to the cytoplasm. The enzyme catalyses (S)-2,3,4,5-tetrahydrodipicolinate + NAD(+) + H2O = (2S,4S)-4-hydroxy-2,3,4,5-tetrahydrodipicolinate + NADH + H(+). The catalysed reaction is (S)-2,3,4,5-tetrahydrodipicolinate + NADP(+) + H2O = (2S,4S)-4-hydroxy-2,3,4,5-tetrahydrodipicolinate + NADPH + H(+). The protein operates within amino-acid biosynthesis; L-lysine biosynthesis via DAP pathway; (S)-tetrahydrodipicolinate from L-aspartate: step 4/4. Catalyzes the conversion of 4-hydroxy-tetrahydrodipicolinate (HTPA) to tetrahydrodipicolinate. This Salmonella agona (strain SL483) protein is 4-hydroxy-tetrahydrodipicolinate reductase.